Here is a 348-residue protein sequence, read N- to C-terminus: Large ribosomal subunit protein uL3m (348 aa).

The transit peptide at 1–40 (MPGWRLLAWAGARVLDRGTGGLGTALGSGNRTDICVLVRS) directs the protein to the mitochondrion.

This sequence belongs to the universal ribosomal protein uL3 family. In terms of assembly, component of the mitochondrial ribosome large subunit (39S) which comprises a 16S rRNA and about 50 distinct proteins.

The protein localises to the mitochondrion. This is Large ribosomal subunit protein uL3m (MRPL3) from Bos taurus (Bovine).